Reading from the N-terminus, the 1691-residue chain is Protein TIC 214 (1691 aa).

The next 6 helical transmembrane spans lie at 19 to 39 (MLLG…SQIL), 60 to 80 (VLAQ…LLLL), 84 to 104 (LLTI…KDFP), 123 to 143 (LFLI…NSVL), 158 to 178 (TVFM…FNFF), and 200 to 220 (FIYA…LGRA). The segment at 819–839 (EKQHTLQRKHKEIGSKSRELK) is disordered.

It belongs to the TIC214 family. Part of the Tic complex.

It localises to the plastid. It is found in the chloroplast inner membrane. Functionally, involved in protein precursor import into chloroplasts. May be part of an intermediate translocation complex acting as a protein-conducting channel at the inner envelope. This Adiantum capillus-veneris (Maidenhair fern) protein is Protein TIC 214.